A 232-amino-acid chain; its full sequence is Ribonuclease 3 (232 aa).

An RNase III domain is found at 5–134 (QTVLKNHFAI…FLGALLLDKD (130 aa)). Glutamate 47 lines the Mg(2+) pocket. Residue aspartate 51 is part of the active site. Aspartate 120 and glutamate 123 together coordinate Mg(2+). Glutamate 123 is a catalytic residue. Positions 160 to 229 (DYKTHLQELL…AKNAVEKGLD (70 aa)) constitute a DRBM domain.

It belongs to the ribonuclease III family. As to quaternary structure, homodimer. Mg(2+) serves as cofactor.

Its subcellular location is the cytoplasm. The catalysed reaction is Endonucleolytic cleavage to 5'-phosphomonoester.. In terms of biological role, digests double-stranded RNA. Involved in the processing of primary rRNA transcript to yield the immediate precursors to the large and small rRNAs (23S and 16S). Processes some mRNAs, and tRNAs when they are encoded in the rRNA operon. Processes pre-crRNA and tracrRNA of type II CRISPR loci if present in the organism. The polypeptide is Ribonuclease 3 (Streptococcus pneumoniae (strain Hungary19A-6)).